Reading from the N-terminus, the 98-residue chain is Alpha-elicitin hibernalin (98 aa).

Cystine bridges form between Cys3–Cys71, Cys27–Cys56, and Cys51–Cys95.

The protein localises to the secreted. Its function is as follows. Induces local and distal defense responses (incompatible hypersensitive reaction) in plants from the solanaceae and cruciferae families. Elicits leaf necrosis and causes the accumulation of pathogenesis-related proteins. Might interact with the lipidic molecules of the plasma membrane. This Phytophthora hibernalis protein is Alpha-elicitin hibernalin.